The primary structure comprises 1025 residues: MKFFALFIYRPVATILISLAITLCGILGFRLLPVAPLPQVDFPVIMVSASLPGASPETMASSVATPLERSLGRIAGVNEMTSSSSLGSTRIILEFNFDRDINGAARDVQAAINAAQSLLPSGMPSRPTYRKANPSDAPIMILTLTSDTYSQGELYDFASTQLAQTIAQIDGVGDVDVGGSSLPAVRVDLNPQALFNQGVSLDAVRTAISDANVRKPQGALEDSAHRWQVQTNDELKTAADYQPLIVHYQNGAAVRLGDVATVSDSVQDVRNAGMTNAKPAILLMIRKLPEANIIQTVDSIRARLPELQQTIPAAIDLQIAQDRSPTIRASLEEVEQTLVISVALVILVVFLFLRSGRATLIPAVAVPVSLIGTFAAMYLCGFSLNNLSLMALTIATGFVVDDAIVVLENISRHLEAGMKPLQAALQGSREVGFTVLSMSLSLVAVFLPLLLMGGLPGRLLREFAVTLSVAIGISLAVSLTLTPMMCGWLLKSGKPHQPTRNRGFGRLLVAVQGGYGKSLKWVLRHSRLTGLVVLGTIALSVWLYISIPKTFFPEQDTGVLMGGIQADQSISFQAMRGKLQDFMKIIREDPAVDNVTGFTGGSRVNSGMMFITLKPRDQRHETAQQVIDRLRKKLANEPGANLFLMAVQDIRVGGRQSNASYQYTLLSDDLSALREWEPKIRKALAALPELADVNSDQQDNGAEMDLVYDRDTMSRLGISVQDANNLLNNAFGQRQISTIYQPLNQYKVVMEVDPAYTQDVSALDKMFVINSEGKPIPLAYFAKWQPANAPLSVNHQGLSAASTISFNLPTGRSLSEASDAINRTMTQLGVPSSVRGSFAGTAQVFQQTMNAQVILILAAIATVYIVLGMLYESYVHPLTILSTLPSAGVGALLALEIFDAPFSLIALIGIMLLIGIVKKNAIMMVDFALEAQRTGNLAPEEAIFQACLLRFRPIMMTTLAALFGALPLVLSGGDGSELRQPLGITIVGGLVMSQLLTLYTTPVVYLFFDRLRLRFSRHSSQPVSE.

12 consecutive transmembrane segments (helical) span residues 15 to 35 (ILISLAITLCGILGFRLLPVA), 333 to 353 (EVEQTLVISVALVILVVFLFL), 360 to 380 (LIPAVAVPVSLIGTFAAMYLC), 387 to 407 (LSLMALTIATGFVVDDAIVVL), 431 to 451 (VGFTVLSMSLSLVAVFLPLLL), 469 to 489 (VAIGISLAVSLTLTPMMCGWL), 528 to 548 (LTGLVVLGTIALSVWLYISIP), 851 to 871 (AQVILILAAIATVYIVLGMLY), 875 to 895 (VHPLTILSTLPSAGVGALLAL), 897 to 917 (IFDAPFSLIALIGIMLLIGIV), 953 to 973 (PIMMTTLAALFGALPLVLSGG), and 984 to 1004 (ITIVGGLVMSQLLTLYTTPVV).

It belongs to the resistance-nodulation-cell division (RND) (TC 2.A.6) family. MdtC subfamily. In terms of assembly, part of a tripartite efflux system composed of MdtA, MdtB and MdtC. MdtC forms a heteromultimer with MdtB.

The protein localises to the cell inner membrane. The chain is Multidrug resistance protein MdtC from Klebsiella pneumoniae (strain 342).